We begin with the raw amino-acid sequence, 82 residues long: ATP synthase subunit c, chloroplastic (82 aa).

Helical transmembrane passes span 3 to 23 (PLIA…ASIG) and 57 to 77 (LAFM…LLFA).

The protein belongs to the ATPase C chain family. In terms of assembly, F-type ATPases have 2 components, F(1) - the catalytic core - and F(0) - the membrane proton channel. F(1) has five subunits: alpha(3), beta(3), gamma(1), delta(1), epsilon(1). F(0) has four main subunits: a(1), b(1), b'(1) and c(10-14). The alpha and beta chains form an alternating ring which encloses part of the gamma chain. F(1) is attached to F(0) by a central stalk formed by the gamma and epsilon chains, while a peripheral stalk is formed by the delta, b and b' chains.

The protein localises to the plastid. The protein resides in the chloroplast thylakoid membrane. F(1)F(0) ATP synthase produces ATP from ADP in the presence of a proton or sodium gradient. F-type ATPases consist of two structural domains, F(1) containing the extramembraneous catalytic core and F(0) containing the membrane proton channel, linked together by a central stalk and a peripheral stalk. During catalysis, ATP synthesis in the catalytic domain of F(1) is coupled via a rotary mechanism of the central stalk subunits to proton translocation. Its function is as follows. Key component of the F(0) channel; it plays a direct role in translocation across the membrane. A homomeric c-ring of between 10-14 subunits forms the central stalk rotor element with the F(1) delta and epsilon subunits. The protein is ATP synthase subunit c, chloroplastic of Nephroselmis olivacea (Green alga).